Consider the following 82-residue polypeptide: uncharacterized protein (82 aa).

A disordered region spans residues 60–82 (YKRRRPDHMMKRNSPSYTGDHKT).

This is an uncharacterized protein from Saccharomyces cerevisiae (strain ATCC 204508 / S288c) (Baker's yeast).